The primary structure comprises 153 residues: Catabolic 3-dehydroquinase (153 aa).

Y24 functions as the Proton acceptor in the catalytic mechanism. The substrate site is built by N75, H81, and D88. The active-site Proton donor is H101. Residues 102–103 (VS) and R112 contribute to the substrate site.

It belongs to the type-II 3-dehydroquinase family. In terms of assembly, homododecamer. Adopts a ring-like structure, composed of an arrangement of two hexameric rings stacked on top of one another.

It carries out the reaction 3-dehydroquinate = 3-dehydroshikimate + H2O. It functions in the pathway aromatic compound metabolism; 3,4-dihydroxybenzoate biosynthesis; 3,4-dihydroxybenzoate from 3-dehydroquinate: step 1/2. In terms of biological role, is involved in the catabolism of quinate. Allows the utilization of quinate as carbon source via the beta-ketoadipate pathway. The protein is Catabolic 3-dehydroquinase of Emericella nidulans (strain FGSC A4 / ATCC 38163 / CBS 112.46 / NRRL 194 / M139) (Aspergillus nidulans).